Reading from the N-terminus, the 187-residue chain is Structural protein ORF187 (187 aa).

Residues 65-85 (IYQPTAIAVSGVGGIIGALLA) traverse the membrane as a helical segment.

It is found in the host membrane. The protein resides in the virion. The sequence is that of Structural protein ORF187 from Acidianus two-tailed virus (ATV).